A 303-amino-acid polypeptide reads, in one-letter code: MTENVNEHTQGHLLGAADIRRIAADAGISPTKKFGQNFVIDPGTVRRIVREAGVTADDHVLEVGPGLGSLTLAILETGATMTAVEIDPPVAERLPKTIAEFMPDAVDRFRVVNRDALTVNPENLPDFKDDDSFTLVANLPYNVATPILLTLLERFDNLGTFLVMVQKEVADRLSEKPGSKIYGTPSVKLAWYGTAERVGVIGRNVFWPAPNVDSALVLFKRYPGGHTPAADNADGSVVDRETVFRLIDAAFGQRRKTLHAALKKIVPSEAFEKAGIDPTRRGETLTIDEFVALARALDEVFAS.

Residues N37, V39, G64, E85, D115, and N138 each contribute to the S-adenosyl-L-methionine site.

Belongs to the class I-like SAM-binding methyltransferase superfamily. rRNA adenine N(6)-methyltransferase family. RsmA subfamily.

The protein localises to the cytoplasm. It carries out the reaction adenosine(1518)/adenosine(1519) in 16S rRNA + 4 S-adenosyl-L-methionine = N(6)-dimethyladenosine(1518)/N(6)-dimethyladenosine(1519) in 16S rRNA + 4 S-adenosyl-L-homocysteine + 4 H(+). Its function is as follows. Specifically dimethylates two adjacent adenosines (A1518 and A1519) in the loop of a conserved hairpin near the 3'-end of 16S rRNA in the 30S particle. May play a critical role in biogenesis of 30S subunits. In Bifidobacterium adolescentis (strain ATCC 15703 / DSM 20083 / NCTC 11814 / E194a), this protein is Ribosomal RNA small subunit methyltransferase A.